A 436-amino-acid polypeptide reads, in one-letter code: Histidine--tRNA ligase (436 aa).

It belongs to the class-II aminoacyl-tRNA synthetase family.

Its subcellular location is the cytoplasm. The catalysed reaction is tRNA(His) + L-histidine + ATP = L-histidyl-tRNA(His) + AMP + diphosphate + H(+). The sequence is that of Histidine--tRNA ligase from Thermococcus kodakarensis (strain ATCC BAA-918 / JCM 12380 / KOD1) (Pyrococcus kodakaraensis (strain KOD1)).